Here is a 384-residue protein sequence, read N- to C-terminus: O-phospho-L-seryl-tRNA:Cys-tRNA synthase 1 (384 aa).

Pyridoxal 5'-phosphate is bound by residues 88-89 (AR), Asn-195, and 218-220 (SGH). Lys-221 is modified (N6-(pyridoxal phosphate)lysine).

It belongs to the SepCysS family. As to quaternary structure, homodimer. Interacts with SepRS. It depends on pyridoxal 5'-phosphate as a cofactor.

The enzyme catalyses O-phospho-L-seryl-tRNA(Cys) + hydrogen sulfide + H(+) = L-cysteinyl-tRNA(Cys) + phosphate. Its function is as follows. Converts O-phospho-L-seryl-tRNA(Cys) (Sep-tRNA(Cys)) to L-cysteinyl-tRNA(Cys) (Cys-tRNA(Cys)). The protein is O-phospho-L-seryl-tRNA:Cys-tRNA synthase 1 of Methanocella arvoryzae (strain DSM 22066 / NBRC 105507 / MRE50).